The sequence spans 1204 residues: MAMDQVNALCEQLVKAVTVMMDPNSTQRYRLEALKFCEEFKEKCPICVPCGLRLAEKTQVAIVRHFGLQILEHVVKFRWNGMSRLEKVYLKNSVMELIANGTLNILEEENHIKDALSRIVVEMIKREWPQHWPDMLIELDTLSKQGETQTELVMFILLRLAEDVVTFQTLPPQRRRDIQQTLTQNMERIFSFLLNTLQENVNKYQQVKTDTSQESKAQANCRVGVAALNTLAGYIDWVSMSHITAENCKLLEILCLLLNEQELQLGAAECLLIAVSRKGKLEDRKPLMVLFGDVAMHYILSAAQTADGGGLVEKHYVFLKRLCQVLCALGNQLCALLGADSDVETPSNFGKYLESFLAFTTHPSQFLRSSTQMTWGALFRHEILSRDPLLLAIIPKYLRASMTNLVKMGFPSKTDSPSCEYSRFDFDSDEDFNAFFNSSRAQQGEVMRLACRLDPKTSFQMAGEWLKYQLSTFLDAGSVNSCSAVGTGEGSLCSVFSPSFVQWEAMTLFLESVITQMFRTLNREEIPVNDGIELLQMVLNFDTKDPLILSCVLTNVSALFPFVTYRPEFLPQVFSKLFSSVTFETVEESKAPRTRAVRNVRRHACSSIIKMCRDYPQLVLPNFDMLYNHVKQLLSNELLLTQMEKCALMEALVLISNQFKNYERQKVFLEELMAPVASIWLSQDMHRVLSDVDAFIAYVGTDQKSCDPGLEDPCGLNRARMSFCVYSILGVVKRTCWPTDLEEAKAGGFVVGYTSSGNPIFRNPCTEQILKLLDNLLALIRTHNTLYAPEMLAKMAEPFTKALDMLDAEKSAILGLPQPLLELNDSPVFKTVLERMQRFFSTLYENCFHILGKAGPSMQQDFYTVEDLATQLLSSAFVNLNNIPDYRLRPMLRVFVKPLVLFCPPEHYEALVSPILGPLFTYLHMRLSQKWQVINQRSLLCGEDEAADENPESQEMLEEQLVRMLTREVMDLITVCCVSKKGADHSSAPPADGDDEEMMATEVTPSAMAELTDLGKCLMKHEDVCTALLITAFNSLAWKDTLSCQRTTSQLCWPLLKQVLSGTLLADAVTWLFTSVLKGLQMHGQHDGCMASLVHLAFQIYEALRPRYLEIRAVMEQIPEIQKDSLDQFDCKLLNPSLQKVADKRRKDQFKRLIAGCIGKPLGEQFRKEVHIKNLPSLFKKTKPMLETEVLDNDGGGLATIFEP.

Position 2 is an N-acetylalanine (Ala-2). Positions 2-108 (AMDQVNALCE…ANGTLNILEE (107 aa)) are necessary for interaction with Ran. Lys-396 is modified (N6-acetyllysine). A necessary for interaction with ILF3 region spans residues 533–640 (ELLQMVLNFD…KQLLSNELLL (108 aa)). A pre-miRNA binding region spans residues 641–642 (TQ). Ser-826 carries the phosphoserine modification.

This sequence belongs to the exportin family. In terms of assembly, component of a nuclear export receptor complex composed of XPO5, RAN, dsRNA-binding proteins and dsRNA. Found in a nuclear export complex with XPO5, RAN, EEF1A1, and aminoacylated tRNA. Found in a nuclear export complex with XPO5, RAN, ILF3 and dsRNA. Found in a nuclear export complex with XPO5, RAN and pre-miRNA. Found in a nuclear export complex with XPO5, RAN, ILF3 and minihelix VA1 dsRNA. Found in a nuclear export complex with XPO5, RAN, ILF3, ZNF346 and dsRNA. Interacts with EEF1A1, ILF3, NUP153, NUP214 and ZNF346. Interacts with RAN and cargo proteins in a GTP-dependent manner. Interacts with isoform 5 of ADAR/ADAR1 (via DRBM domains). Interacts with SMAD4; mediates nuclear export of SMAD4. Interacts with RAN (GTP-bound form). Expressed in heart, brain, placenta, lung, skeletal muscle, kidney and pancreas.

It localises to the nucleus. The protein resides in the cytoplasm. Its function is as follows. Mediates the nuclear export of proteins bearing a double-stranded RNA binding domain (dsRBD) and double-stranded RNAs (cargos). XPO5 in the nucleus binds cooperatively to the RNA and to the GTPase Ran in its active GTP-bound form. Proteins containing dsRBDs can associate with this trimeric complex through the RNA. Docking of this complex to the nuclear pore complex (NPC) is mediated through binding to nucleoporins. Upon transit of a nuclear export complex into the cytoplasm, hydrolysis of Ran-GTP to Ran-GDP (induced by RANBP1 and RANGAP1, respectively) cause disassembly of the complex and release of the cargo from the export receptor. XPO5 then returns to the nuclear compartment by diffusion through the nuclear pore complex, to mediate another round of transport. The directionality of nuclear export is thought to be conferred by an asymmetric distribution of the GTP- and GDP-bound forms of Ran between the cytoplasm and nucleus. Overexpression may in some circumstances enhance RNA-mediated gene silencing (RNAi). Mediates nuclear export of isoform 5 of ADAR/ADAR1 in a RanGTP-dependent manner. In terms of biological role, mediates the nuclear export of micro-RNA precursors, which form short hairpins. Also mediates the nuclear export of synthetic short hairpin RNAs used for RNA interference. In some circumstances can also mediate the nuclear export of deacylated and aminoacylated tRNAs. Specifically recognizes dsRNAs that lack a 5'-overhang in a sequence-independent manner, have only a short 3'-overhang, and that have a double-stranded length of at least 15 base-pairs. Binding is dependent on Ran-GTP. Functionally, (Microbial infection) Mediates the nuclear export of adenovirus VA1 dsRNA. In Homo sapiens (Human), this protein is Exportin-5 (XPO5).